A 58-amino-acid chain; its full sequence is ATP synthase F(0) complex subunit k, mitochondrial (58 aa).

An N6-acetyllysine mark is found at lysine 16 and lysine 17. The chain crosses the membrane as a helical span at residues 23–45 (TLTGRMNCVLATYGSIALIVLYF).

Component of the ATP synthase complex composed at least of ATP5F1A/subunit alpha, ATP5F1B/subunit beta, ATP5MC1/subunit c (homooctomer), MT-ATP6/subunit a, MT-ATP8/subunit 8, ATP5ME/subunit e, ATP5MF/subunit f, ATP5MG/subunit g, ATP5MK/subunit k, ATP5MJ/subunit j, ATP5F1C/subunit gamma, ATP5F1D/subunit delta, ATP5F1E/subunit epsilon, ATP5PF/subunit F6, ATP5PB/subunit b, ATP5PD/subunit d, ATP5PO/subunit OSCP. ATP synthase complex consists of a soluble F(1) head domain (subunits alpha(3) and beta(3)) - the catalytic core - and a membrane F(0) domain - the membrane proton channel (subunits c, a, 8, e, f, g, k and j). These two domains are linked by a central stalk (subunits gamma, delta, and epsilon) rotating inside the F1 region and a stationary peripheral stalk (subunits F6, b, d, and OSCP). The ATP synthase complex/complex V exists as a monomeric and a dimeric supercomplex that helps shape mitochondrial cristae to optimize proton flow.

It localises to the mitochondrion membrane. Functionally, subunit k, of the mitochondrial membrane ATP synthase complex (F(1)F(0) ATP synthase or Complex V) that produces ATP from ADP in the presence of a proton gradient across the membrane which is generated by electron transport complexes of the respiratory chain. ATP synthase complex consist of a soluble F(1) head domain - the catalytic core - and a membrane F(1) domain - the membrane proton channel. These two domains are linked by a central stalk rotating inside the F(1) region and a stationary peripheral stalk. During catalysis, ATP synthesis in the catalytic domain of F(1) is coupled via a rotary mechanism of the central stalk subunits to proton translocation. In vivo, can only synthesize ATP although its ATP hydrolase activity can be activated artificially in vitro. Part of the complex F(0) domain. Required for dimerization of the ATP synthase complex and as such regulates ATP synthesis in the mitochondria. The polypeptide is ATP synthase F(0) complex subunit k, mitochondrial (Homo sapiens (Human)).